Consider the following 214-residue polypeptide: RNA pyrophosphohydrolase (214 aa).

Residues 6-149 enclose the Nudix hydrolase domain; sequence GFRPNVGIIL…KRDVYQLALT (144 aa). Residues 38 to 59 carry the Nudix box motif; it reads GGIKYGETPMQAMYRELHEETG.

Belongs to the Nudix hydrolase family. RppH subfamily. A divalent metal cation serves as cofactor.

Its function is as follows. Accelerates the degradation of transcripts by removing pyrophosphate from the 5'-end of triphosphorylated RNA, leading to a more labile monophosphorylated state that can stimulate subsequent ribonuclease cleavage. This chain is RNA pyrophosphohydrolase, found in Burkholderia orbicola (strain MC0-3).